The primary structure comprises 1221 residues: MTLRLDTSLKRGASRNIPPIPTFSSVSNENLSSSPYTSSSYYSSNCESLDSIGDISIDSSVYSSSEIEFVGNGDKKKNFINNNNNNNGNKYDFSNLLETPKLKFSPSTGRTKNNNNNNNNNINNNNYKKNDNQKKNFKYIEDNESDYLDDENDEENVDIDLSILNVNFKIINENNSQNNNNNKYQINNNMQKTGGRNGSVFFVNNNNNSNNNNNNNNNNNNNNNNNNNNNNNNNNNNDNSNNKNNFKNNNTSYTHNSNKNNNENKNTFAIKQQLVSTPKNKLSQTYREKVILEHLNILIESNKACNFPKLINWYKAAPTSNLSNVNNNNSNNNNNNSNNNITNSRYGSNYEDIYDDNYYDEVDDYDSGKEEEESTKTITKTITTTTASIKPNIQYMHLILEYANMGTLKEYGKDNNFEFTISQMKSLLFQVIYSLAISQKEFEFVHNDLHFGNVLLTSFPVDKKYIVYQDKLDNGEFNNWIVGGDFIVKISDFGLSRIKLPSNEIIYNQRNDRSKEFCFYSDLYSFSSLLNKIKIKESPSSSSTTSTSTSQVLIKSDSDSSSSASSSSSSSSSSSSSSSSSLPKSKNKSNRSKDNQSKLDPEKRLLTKLKKSMKDLPPYKLLDHPFFDSLKVCPNDCLPLNSIRISTNGIVPKEFPKPLSPIFEKNNIISIPSSPISTTTTTFPTTPTIKSTTKKISKTIVIPSSPSLALPPNLSVKSPFAPPSKKQLQQYQQQQKQQTISMFKYDDEEEKEEEEKEKEKEKEKEKEKEEEGEEGNIPKEKLILKMTPKPYIFIHHFSPNSLGPLSPPSSTSSTLLGALSQEKFEKKQRQIQDSEKVNKNEEENQTKDDADNISPPLPHAIKKSIYNNKNNHQKISTNTIIKTPIKAPIKTITQIPTETPNKIPNKTISQSNPVIIRDETPQKGIPFEKKVVSTPLIYKERPHFVFLKKAKLSSNSNNKENIINFHNNNNNNNNNNNNNNNNNNNNNNNNNNNKDSYNEKGNATSYCNGDDDDDDFKIDHKENVVSGFLIEKDHEFIGDKENSKEKQKVSKRVQDKAWQELNAFLRKNPTQGVSRIKSTDYPALSDLFPKKKRCSENNFVFEKEKKQEKENKEKENKEKEKKQLEKQKQLEREKLEKDRLEKDRLEKEQQEKDCLEREKFLENERLEKEQEREKLEKEIKILVVSKKNRTNPLQKDYDRYIKKVGSSLTEKRASKPMNDNI.

3 disordered regions span residues 1-37, 104-133, and 173-263; these read MTLR…SPYT, FSPS…NDNQ, and ENNS…NNNE. Composition is skewed to low complexity over residues 24 to 37, 112 to 127, 173 to 192, and 204 to 263; these read SSVS…SPYT, KNNN…NNNY, ENNS…NMQK, and NNNN…NNNE. Residues 186 to 627 form the Protein kinase domain; it reads INNNMQKTGG…PYKLLDHPFF (442 aa). 192–200 is a binding site for ATP; it reads KTGGRNGSV. Lysine 271 is an ATP binding site. The span at 324–344 shows a compositional bias: low complexity; it reads NVNNNNSNNNNNNSNNNITNS. Positions 324 to 346 are disordered; that stretch reads NVNNNNSNNNNNNSNNNITNSRY. Residue aspartate 448 is the Proton acceptor of the active site. Composition is skewed to low complexity over residues 538 to 550 and 559 to 584; these read SPSS…TSTS and DSSS…SLPK. 5 disordered regions span residues 538–604, 712–782, 823–858, 959–1008, and 1105–1152; these read SPSS…PEKR, PNLS…KEKL, KFEK…PPLP, KENI…SYCN, and KKQE…QQEK. Residues 591-604 show a composition bias toward basic and acidic residues; that stretch reads RSKDNQSKLDPEKR. A compositionally biased stretch (low complexity) spans 725–738; sequence KKQLQQYQQQQKQQ. The span at 746–756 shows a compositional bias: acidic residues; it reads DDEEEKEEEEK. Basic and acidic residues-rich tracts occupy residues 757–769 and 823–850; these read EKEK…KEKE and KFEK…KDDA. Residues 959–993 are compositionally biased toward low complexity; sequence KENIINFHNNNNNNNNNNNNNNNNNNNNNNNNNNN.

This sequence belongs to the protein kinase superfamily. Ser/Thr protein kinase family.

The enzyme catalyses L-seryl-[protein] + ATP = O-phospho-L-seryl-[protein] + ADP + H(+). The catalysed reaction is L-threonyl-[protein] + ATP = O-phospho-L-threonyl-[protein] + ADP + H(+). This Dictyostelium discoideum (Social amoeba) protein is Probable serine/threonine-protein kinase DDB_G0286465.